The chain runs to 258 residues: 5'-nucleotidase SurE (258 aa).

A divalent metal cation is bound by residues aspartate 9, aspartate 10, serine 42, and asparagine 95.

The protein belongs to the SurE nucleotidase family. A divalent metal cation is required as a cofactor.

The protein localises to the cytoplasm. It carries out the reaction a ribonucleoside 5'-phosphate + H2O = a ribonucleoside + phosphate. In terms of biological role, nucleotidase that shows phosphatase activity on nucleoside 5'-monophosphates. This is 5'-nucleotidase SurE from Campylobacter concisus (strain 13826).